We begin with the raw amino-acid sequence, 283 residues long: Elongation factor Ts (283 aa).

The involved in Mg(2+) ion dislocation from EF-Tu stretch occupies residues 80–83; it reads TDFV.

Belongs to the EF-Ts family.

It localises to the cytoplasm. In terms of biological role, associates with the EF-Tu.GDP complex and induces the exchange of GDP to GTP. It remains bound to the aminoacyl-tRNA.EF-Tu.GTP complex up to the GTP hydrolysis stage on the ribosome. The protein is Elongation factor Ts of Klebsiella pneumoniae (strain 342).